A 496-amino-acid chain; its full sequence is O-acetyltransferase cpsE (496 aa).

Residues 203 to 217 (IGTQGQLPDGVQSSD) show a composition bias toward polar residues. The tract at residues 203-228 (IGTQGQLPDGVQSSDDPTDGAGDIFE) is disordered.

The protein belongs to the fumigaclavine B O-acetyltransferase family.

It catalyses the reaction campesine A + acetyl-CoA = campesine C + CoA. It functions in the pathway alkaloid biosynthesis. Its function is as follows. O-acetyltransferase; part of the gene cluster that mediates the biosynthesis of campesine G, a dimeric indole piperazine alkaloid that shows good insecticidal activity Galleria mellonella. Within the pathway, cpsE acetylates N13 of campesine A to produce campesine C. CpsE produces an inseparable mixture of two acyl-atropisomers due to the spontaneous rotation of an acyl group at N13 of piperazine ring. The non-canonical non-ribosomal peptide synthetase cpsA catalyzes the first steps of the pathway by producing L-tryptophanal and L-valinal from their respective amino-acids. These products condensate spontaneously to form trypyl-valyl pyrazine also known as didehydrocampesine A. The NmrA-like family domain-containing oxidoreductase cpsB is the next enzyme in cps pathway and reduces the unstable didehydrocampesine A to campesine A. The methyltransferase cpsF and the acetyltransferase cpsE both recognize N13 of piperazine ring to carry out methylation and acetylation of campesine A to produce campesine C and B, respectively. The cytochrome P450 monooxygenase cpsD then acts as a dimerase that catalyzes oxidative heterocoupling between campesine B and C to produce heterodimers with unexpected 6/5/6/6/6/6/5/6 eight-ring scaffold called campesine D. Finally,the cytochrome P450 monooxygenase cpsC is a regioselective dehydrogenase that catalyzes dehydrogenation reaction towards C2-N1 to produce campesine G. The protein is O-acetyltransferase cpsE of Aspergillus campestris (strain IBT 28561).